A 147-amino-acid polypeptide reads, in one-letter code: Transthyretin (147 aa).

The signal sequence occupies residues 1–20 (MASHRLLLLCLAGLVFVSEA). The residue at position 30 (Cys-30) is a Sulfocysteine. L-thyroxine is bound at residue Lys-35. Glu-62 is modified (4-carboxyglutamate; in a patient with Moyamoya disease). Ser-72 carries the post-translational modification Phosphoserine. Glu-74 contributes to the L-thyroxine binding site. An N-linked (GlcNAc...) asparagine glycan is attached at Asn-118. Ser-137 serves as a coordination point for L-thyroxine.

This sequence belongs to the transthyretin family. Homotetramer. Dimer of dimers. In the homotetramer, subunits assemble around a central channel that can accommodate two ligand molecules. Interacts with RBP4. Post-translationally, not glycosylated under normal conditions. Following unfolding, caused for example by variant AMYLD1 'Gly-38', the cryptic Asn-118 site is exposed and glycosylated by STT3B-containing OST complex, leading to its degradation by the ER-associated degradation (ERAD) pathway. Sulfonation of the reactive cysteine Cys-30 enhances the stability of the native conformation of TTR, avoiding misassembly of the protein leading to amyloid formation. As to expression, detected in serum and cerebrospinal fluid (at protein level). Highly expressed in choroid plexus epithelial cells. Detected in retina pigment epithelium and liver.

It is found in the secreted. Its subcellular location is the cytoplasm. In terms of biological role, thyroid hormone-binding protein. Probably transports thyroxine from the bloodstream to the brain. The polypeptide is Transthyretin (TTR) (Homo sapiens (Human)).